Here is a 170-residue protein sequence, read N- to C-terminus: Ribosome maturation factor RimM (170 aa).

The PRC barrel domain occupies 97 to 170 (KPDEYYWVDL…LVVVDWDPEF (74 aa)).

This sequence belongs to the RimM family. As to quaternary structure, binds ribosomal protein uS19.

It is found in the cytoplasm. In terms of biological role, an accessory protein needed during the final step in the assembly of 30S ribosomal subunit, possibly for assembly of the head region. Essential for efficient processing of 16S rRNA. May be needed both before and after RbfA during the maturation of 16S rRNA. It has affinity for free ribosomal 30S subunits but not for 70S ribosomes. This Stenotrophomonas maltophilia (strain K279a) protein is Ribosome maturation factor RimM.